The chain runs to 301 residues: Probable alpha-L-glutamate ligase (301 aa).

The ATP-grasp domain occupies 104–287 (LQLLSRKGIG…IAGIIIQYLE (184 aa)). Residues K141, 178–179 (EY), D187, and 211–213 (RSN) contribute to the ATP site. Mg(2+)-binding residues include D248, E260, and N262. Residues D248, E260, and N262 each coordinate Mn(2+).

Belongs to the RimK family. It depends on Mg(2+) as a cofactor. Mn(2+) serves as cofactor.

The chain is Probable alpha-L-glutamate ligase from Pseudomonas aeruginosa (strain UCBPP-PA14).